Consider the following 335-residue polypeptide: Glycerol-3-phosphate dehydrogenase [NAD(P)+] (335 aa).

S15, Y16, H36, and K110 together coordinate NADPH. K110, G139, and T141 together coordinate sn-glycerol 3-phosphate. Residue A143 coordinates NADPH. Residues K195, D248, S258, R259, and N260 each contribute to the sn-glycerol 3-phosphate site. K195 acts as the Proton acceptor in catalysis. R259 contributes to the NADPH binding site. NADPH is bound by residues V283 and E285.

The protein belongs to the NAD-dependent glycerol-3-phosphate dehydrogenase family.

The protein resides in the cytoplasm. It catalyses the reaction sn-glycerol 3-phosphate + NAD(+) = dihydroxyacetone phosphate + NADH + H(+). The catalysed reaction is sn-glycerol 3-phosphate + NADP(+) = dihydroxyacetone phosphate + NADPH + H(+). The protein operates within membrane lipid metabolism; glycerophospholipid metabolism. In terms of biological role, catalyzes the reduction of the glycolytic intermediate dihydroxyacetone phosphate (DHAP) to sn-glycerol 3-phosphate (G3P), the key precursor for phospholipid synthesis. This Haemophilus influenzae (strain 86-028NP) protein is Glycerol-3-phosphate dehydrogenase [NAD(P)+].